A 687-amino-acid chain; its full sequence is C-mannosyltransferase dpy-19 (687 aa).

11 consecutive transmembrane segments (helical) span residues Gly-24–Leu-44, Ile-170–Leu-190, Val-191–Glu-211, Glu-223–Tyr-243, Leu-253–Phe-273, Ile-276–Ile-296, Ala-303–Phe-323, Pro-324–Leu-344, Leu-347–Phe-367, Leu-415–Phe-435, and Gly-454–Met-474.

The protein belongs to the dpy-19 family.

The protein resides in the endoplasmic reticulum membrane. Functionally, C-mannosyltransferase that mediates C-mannosylation of tryptophan residues on target proteins such as unc-5 and mig-21. Mediates the attachment of alpha-mannose in C-C linkage to the C2 of the indole ring of tryptophan. C-mannosylation takes place in the endoplasmic reticulum and frequently found in thrombospondin (TSP) type-1 repeats and in the WSXWS motif of type I cytokine receptors. Required to orient neuroblasts QL and QR correctly on the anterior/posterior (A/P) axis: QL and QR are born in the same A/P position, but polarize and migrate left/right asymmetrically, QL migrates toward the posterior and QR migrates toward the anterior. Required with unc-40 to express mab-5 correctly in the Q cell descendants. This Caenorhabditis briggsae protein is C-mannosyltransferase dpy-19.